A 234-amino-acid polypeptide reads, in one-letter code: Sugar fermentation stimulation protein homolog (234 aa).

Belongs to the SfsA family.

In Shewanella sp. (strain ANA-3), this protein is Sugar fermentation stimulation protein homolog.